We begin with the raw amino-acid sequence, 1244 residues long: ATP-dependent helicase/nuclease subunit A (1244 aa).

The UvrD-like helicase ATP-binding domain maps to 4-475 (KKWTAEQLAA…IGLSKNFRSR (472 aa)). 25-32 (AAAGAGKT) contributes to the ATP binding site. One can recognise a UvrD-like helicase C-terminal domain in the interval 515-816 (EDVKTATGPV…RIMSIHKSKG (302 aa)). A disordered region spans residues 538-559 (EQNTDSAEEKLTDGEEQEDLDS).

The protein belongs to the helicase family. AddA subfamily. In terms of assembly, heterodimer of AddA and AddB/RexB. Mg(2+) serves as cofactor.

It catalyses the reaction Couples ATP hydrolysis with the unwinding of duplex DNA by translocating in the 3'-5' direction.. The catalysed reaction is ATP + H2O = ADP + phosphate + H(+). Its function is as follows. The heterodimer acts as both an ATP-dependent DNA helicase and an ATP-dependent, dual-direction single-stranded exonuclease. Recognizes the chi site generating a DNA molecule suitable for the initiation of homologous recombination. The AddA nuclease domain is required for chi fragment generation; this subunit has the helicase and 3' -&gt; 5' nuclease activities. This is ATP-dependent helicase/nuclease subunit A from Desulforamulus reducens (strain ATCC BAA-1160 / DSM 100696 / MI-1) (Desulfotomaculum reducens).